Here is a 442-residue protein sequence, read N- to C-terminus: UDP-N-acetylmuramoylalanine--D-glutamate ligase (442 aa).

113 to 119 (GSNGKTT) contributes to the ATP binding site.

Belongs to the MurCDEF family.

It is found in the cytoplasm. It carries out the reaction UDP-N-acetyl-alpha-D-muramoyl-L-alanine + D-glutamate + ATP = UDP-N-acetyl-alpha-D-muramoyl-L-alanyl-D-glutamate + ADP + phosphate + H(+). Its pathway is cell wall biogenesis; peptidoglycan biosynthesis. Functionally, cell wall formation. Catalyzes the addition of glutamate to the nucleotide precursor UDP-N-acetylmuramoyl-L-alanine (UMA). This chain is UDP-N-acetylmuramoylalanine--D-glutamate ligase, found in Coxiella burnetii (strain CbuK_Q154) (Coxiella burnetii (strain Q154)).